The following is a 339-amino-acid chain: GTPase Era (339 aa).

The RPE1 insert domain maps to R4 to S48. The Era-type G domain maps to K51–W220. A G1 region spans residues G59–S66. G59–S66 is a GTP binding site. Residues Q85 to S89 are G2. The tract at residues D106 to G109 is G3. Residues D106 to I110 and N168 to D171 each bind GTP. A G4 region spans residues N168–D171. The interval I196–A198 is G5. The KH type-2 domain maps to L248 to E325.

Belongs to the TRAFAC class TrmE-Era-EngA-EngB-Septin-like GTPase superfamily. Era GTPase family. As to quaternary structure, monomer.

It localises to the cytoplasm. The protein resides in the cell inner membrane. An essential GTPase that binds both GDP and GTP, with rapid nucleotide exchange. Plays a role in 16S rRNA processing and 30S ribosomal subunit biogenesis and possibly also in cell cycle regulation and energy metabolism. This chain is GTPase Era, found in Rickettsia conorii (strain ATCC VR-613 / Malish 7).